The chain runs to 397 residues: Elongation factor Tu (397 aa).

The tr-type G domain occupies Lys-10–Val-207. The interval Gly-19 to Thr-26 is G1. Residue Gly-19–Thr-26 coordinates GTP. Mg(2+) is bound at residue Thr-26. Residues Gly-63–Asn-67 are G2. The segment at Asp-84–Gly-87 is G3. GTP is bound by residues Asp-84–His-88 and Asn-139–Asp-142. The interval Asn-139–Asp-142 is G4. The tract at residues Ser-177–Leu-179 is G5.

The protein belongs to the TRAFAC class translation factor GTPase superfamily. Classic translation factor GTPase family. EF-Tu/EF-1A subfamily. As to quaternary structure, monomer.

The protein resides in the cytoplasm. The catalysed reaction is GTP + H2O = GDP + phosphate + H(+). Functionally, GTP hydrolase that promotes the GTP-dependent binding of aminoacyl-tRNA to the A-site of ribosomes during protein biosynthesis. This Clavibacter michiganensis subsp. michiganensis (strain NCPPB 382) protein is Elongation factor Tu.